Consider the following 443-residue polypeptide: Chromosomal replication initiator protein DnaA (443 aa).

The domain I, interacts with DnaA modulators stretch occupies residues 1–67 (MDAWSRSLER…RELLAHFAGF (67 aa)). The tract at residues 67-105 (FSDVFLEIGSRPRPVEAQNAPFSTPSAHVSSEPQVPFAG) is domain II. The interval 106–323 (NLDNHYTFAN…GALNTLTARA (218 aa)) is domain III, AAA+ region. 4 residues coordinate ATP: Gly-151, Gly-153, Lys-154, and Thr-155. The tract at residues 324-443 (NFTGRAITTE…WDKLIRKLSE (120 aa)) is domain IV, binds dsDNA.

Belongs to the DnaA family. As to quaternary structure, oligomerizes as a right-handed, spiral filament on DNA at oriC.

The protein localises to the cytoplasm. Plays an essential role in the initiation and regulation of chromosomal replication. ATP-DnaA binds to the origin of replication (oriC) to initiate formation of the DNA replication initiation complex once per cell cycle. Binds the DnaA box (a 9 base pair repeat at the origin) and separates the double-stranded (ds)DNA. Forms a right-handed helical filament on oriC DNA; dsDNA binds to the exterior of the filament while single-stranded (ss)DNA is stabiized in the filament's interior. The ATP-DnaA-oriC complex binds and stabilizes one strand of the AT-rich DNA unwinding element (DUE), permitting loading of DNA polymerase. After initiation quickly degrades to an ADP-DnaA complex that is not apt for DNA replication. Binds acidic phospholipids. This Stenotrophomonas maltophilia (strain R551-3) protein is Chromosomal replication initiator protein DnaA.